The primary structure comprises 397 residues: L-aspartate--L-methionine ligase (397 aa).

Residues Val131 to Lys347 form the ATP-grasp domain. Residues Lys136, Val171, Lys173, Gly183, Val186, Ile188, Glu215, Gln216, Ile218, Asn223, and Thr246 each coordinate ADP. Asp288 provides a ligand contact to Mg(2+). ADP is bound by residues Leu290 and Ile300. Asp301 lines the Mg(2+) pocket. Arg305 acts as the Critical for catalysis in catalysis.

Primarily a monomer in solution. Minor homodimer formation. Requires Mg(2+) as cofactor.

It catalyses the reaction L-aspartate + L-methionine + ATP = L-aspartyl-L-methionine + ADP + phosphate + H(+). It functions in the pathway amino-acid metabolism. L-amino acid ligase, which preferentially catalyzes the formation of L-aspartyl-L-methionine dipeptide from L-aspartate and L-methionine in the presence of ATP. Less active with L-asparagine and L-methionine as substrates. Less active with L-aspartate and either L-phenylalanine, L-valine, L-leucine or L-isoleucine as substrates. Decreased activity when L-methionine is substituted with seleno-DL-methionine, L-homocysteine, L-methionine sulfoxide, L-methionine sulfoximine and o-acetyl-L-serine. Decreased activity with acetylation of L-methionine amino group. Decreased activity by modification of L-methionine carboxylate to L-methionine methyl ester. No activity when L-methionine is substituted with L-homoserine. No activity with formylation of L-methionine amino group. No activity by modification of L-methionine carboxylate to L-methionine-glycine carboxylate. No activity when L-aspartate substrate is replaced by analogs such as L-homoserine, DL-aspartate beta-methyl ester, L-glutamate or o-acetyl-L-serine. No activity when L-aspartate amino and alpha-carboxylate groups are modified to L-malate, glycine-L-aspartate, L-aspartate-glycine or N-carbamoyl-DL-aspartate. No activity with L-methionine or L-aspartate as sole substrates. No activity in presence of other nucleoside triphosphates including GTP, CTP, UTP, TTP or ITP. Involved in sulfur amino acid metabolism. This is L-aspartate--L-methionine ligase from Staphylococcus aureus (strain NCTC 8325 / PS 47).